We begin with the raw amino-acid sequence, 322 residues long: HPr kinase/phosphorylase (322 aa).

Active-site residues include H143 and K164. 158-165 (GRSGVGKS) provides a ligand contact to ATP. S165 is a Mg(2+) binding site. D182 (proton acceptor; for phosphorylation activity. Proton donor; for dephosphorylation activity) is an active-site residue. The important for the catalytic mechanism of both phosphorylation and dephosphorylation stretch occupies residues 206-215 (MEIRGLGILN). Residue E207 participates in Mg(2+) binding. R250 is a catalytic residue. The tract at residues 271 to 276 (PVKPGR) is important for the catalytic mechanism of dephosphorylation.

The protein belongs to the HPrK/P family. Homohexamer. Mg(2+) serves as cofactor.

The enzyme catalyses [HPr protein]-L-serine + ATP = [HPr protein]-O-phospho-L-serine + ADP + H(+). It catalyses the reaction [HPr protein]-O-phospho-L-serine + phosphate + H(+) = [HPr protein]-L-serine + diphosphate. Functionally, catalyzes the ATP- as well as the pyrophosphate-dependent phosphorylation of a specific serine residue in HPr, a phosphocarrier protein of the phosphoenolpyruvate-dependent sugar phosphotransferase system (PTS). HprK/P also catalyzes the pyrophosphate-producing, inorganic phosphate-dependent dephosphorylation (phosphorolysis) of seryl-phosphorylated HPr (P-Ser-HPr). The polypeptide is HPr kinase/phosphorylase (Leptospira biflexa serovar Patoc (strain Patoc 1 / Ames)).